We begin with the raw amino-acid sequence, 177 residues long: Small ribosomal subunit protein uS4 (177 aa).

The region spanning 104 to 166 (RRLQTIVYKK…PTSPFKQHPP (63 aa)) is the S4 RNA-binding domain. The tract at residues 158 to 177 (TSPFKQHPPTQQGEENVQQA) is disordered. Over residues 165–177 (PPTQQGEENVQQA) the composition is skewed to polar residues.

It belongs to the universal ribosomal protein uS4 family. Part of the 30S ribosomal subunit. Contacts protein S5. The interaction surface between S4 and S5 is involved in control of translational fidelity.

In terms of biological role, one of the primary rRNA binding proteins, it binds directly to 16S rRNA where it nucleates assembly of the body of the 30S subunit. With S5 and S12 plays an important role in translational accuracy. This Sulfurisphaera tokodaii (strain DSM 16993 / JCM 10545 / NBRC 100140 / 7) (Sulfolobus tokodaii) protein is Small ribosomal subunit protein uS4.